We begin with the raw amino-acid sequence, 328 residues long: Flagellar motor switch protein FliM (328 aa).

The interval 1 to 45 (MSDVLSQEEINQLIEALMKGELKEEDLLKEEEEKKVKPYDFKRPS) is interaction with unphosphorylated CheY.

This sequence belongs to the FliM family. Interacts (via N-terminus) with unphosphorylated CheY. Interacts (via central domain) with FliG (via central domain or via central domain and C-terminus).

It localises to the cell inner membrane. The protein localises to the bacterial flagellum basal body. Functionally, fliM is one of three proteins (FliG, FliN, FliM) that forms the rotor-mounted switch complex (C ring), located at the base of the basal body. This complex interacts with the CheY and CheX chemotaxis proteins, in addition to contacting components of the motor that determine the direction of flagellar rotation. The polypeptide is Flagellar motor switch protein FliM (Thermotoga maritima (strain ATCC 43589 / DSM 3109 / JCM 10099 / NBRC 100826 / MSB8)).